Reading from the N-terminus, the 135-residue chain is Histone H2A (135 aa).

Belongs to the histone H2A family. In terms of assembly, the nucleosome is a histone octamer containing two molecules each of H2A, H2B, H3 and H4 assembled in one H3-H4 heterotetramer and two H2A-H2B heterodimers. The octamer wraps approximately 147 bp of DNA.

Its subcellular location is the nucleus. The protein resides in the chromosome. Functionally, core component of nucleosome. Nucleosomes wrap and compact DNA into chromatin, limiting DNA accessibility to the cellular machineries which require DNA as a template. Histones thereby play a central role in transcription regulation, DNA repair, DNA replication and chromosomal stability. DNA accessibility is regulated via a complex set of post-translational modifications of histones, also called histone code, and nucleosome remodeling. This is Histone H2A from Trypanosoma cruzi.